Consider the following 387-residue polypeptide: Protein TsgA homolog (387 aa).

12 helical membrane-spanning segments follow: residues 11–31 (WISF…GMIM), 47–67 (NIFT…SWLI), 76–96 (LIFG…STSI), 101–121 (INIF…TFII), 134–154 (LLLT…ISAY), 160–180 (ILWY…FILT), 205–225 (IILL…FISW), 243–263 (VLVS…SFII), 271–291 (MFIF…YSKS), 299–319 (IISL…LASL), 331–351 (LILF…SPIV), and 358–378 (TTLI…CIIF).

This sequence belongs to the major facilitator superfamily. TsgA family.

It is found in the cell membrane. The polypeptide is Protein TsgA homolog (Buchnera aphidicola subsp. Schizaphis graminum (strain Sg)).